The chain runs to 420 residues: Dynein axonemal assembly factor 4 (420 aa).

Positions 3-87 (VRVSEFSWQQ…KEPVLWESLS (85 aa)) constitute a CS domain. A mediates interaction with ESR1 and STUB1 region spans residues 7 to 103 (EFSWQQTPAA…EMMQRIREKS (97 aa)). Basic and acidic residues predominate over residues 165–192 (CQKKADGQKRVQRKEKPLQGKQAEERGA). The disordered stretch occupies residues 165-212 (CQKKADGQKRVQRKEKPLQGKQAEERGALKPQSLPRKAPPTRLPTRGR). TPR repeat units lie at residues 288-321 (PDWL…NRKI), 323-355 (VLYL…LTPP), and 364-397 (MKAH…DPAN).

Interacts with ZMYND10. Interacts with STUB1. Interacts with ESR1 and ESR2. Interacts with DNAAF2. Interacts with CCT3, CCT4, CCT5 and CCT8. Interacts with DNAAF6/PIH1D3.

Its subcellular location is the nucleus. It localises to the cytoplasm. The protein resides in the cell projection. The protein localises to the neuron projection. It is found in the dynein axonemal particle. Its function is as follows. Involved in neuronal migration during development of the cerebral neocortex. May regulate the stability and proteasomal degradation of the estrogen receptors that play an important role in neuronal differentiation, survival and plasticity. Axonemal dynein assembly factor required for ciliary motility. The polypeptide is Dynein axonemal assembly factor 4 (Rattus norvegicus (Rat)).